The primary structure comprises 136 residues: Small ribosomal subunit protein uS9 (136 aa).

The protein belongs to the universal ribosomal protein uS9 family.

This is Small ribosomal subunit protein uS9 from Borreliella afzelii (strain PKo) (Borrelia afzelii).